The following is a 302-amino-acid chain: uncharacterized protein (302 aa).

The region spanning 13-89 (QTLFKFLKKT…VNLDIVYEDN (77 aa)) is the S4 RNA-binding domain. The active site involves Asp-141.

Belongs to the pseudouridine synthase RluA family.

It carries out the reaction a uridine in RNA = a pseudouridine in RNA. This is an uncharacterized protein from Mycoplasma capricolum subsp. capricolum (strain California kid / ATCC 27343 / NCTC 10154).